Here is a 631-residue protein sequence, read N- to C-terminus: MSTTTLTRREQRAKAQHFIDTLEGTAFPNSKRIYVTGSQHDIRVPMREIQLSPTLIGGSKDNPQFEENEAVPVYDTSGPYGDPEVAINVQQGLAKLRQPWIDARNDSEELDDRSSAYTRERLADDGLDDLRFTGLLTPKRAKAGKRVTQLHYARQGIVTPEMEFIAIRENMGRERIRSEVLRHQHPGMNFGARLPENITPEFVRDEVAAGRAIIPANINHPESEPMIIGRNFLVKVNANIGNSAVTSSIEEEVEKLVWSTRWGADTVMDLSTGRYIHETREWILRNSPVPIGTVPIYQALEKVNGIAEDLTWEAFRDTLLEQAEQGVDYFTIHAGVLLRYVPMTAKRLTGIVSRGGSIMAKWCLSHHKENFLFEHFREICEICAAYDVSLSLGDGLRPGSIQDANDEAQFSELHTLGELTKIAWEYDVQVMIEGPGHVPMHMIQRNMTEELESCHEAPFYTLGPLTTDIAPGYDHFTSGIGAAMIGWFGCAMLCYVTPKEHLGLPNKEDVKQGLITYKIAAHAADLAKGHPGAQIRDNAMSKARFEFRWEDQFNLALDPFTARAYHDETLPQESGKVAHFCSMCGPKFCSMKISQEVRDYAAAQAIEVGMADMSENFRAKGGEIYLKREEA.

Substrate is bound by residues Asn-239, Met-268, Tyr-297, His-333, 353 to 355 (SRG), 394 to 397 (DGLR), and Glu-433. His-437 is a binding site for Zn(2+). Tyr-460 is a binding site for substrate. His-501 contributes to the Zn(2+) binding site. [4Fe-4S] cluster is bound by residues Cys-581, Cys-584, and Cys-589.

Belongs to the ThiC family. Homodimer. [4Fe-4S] cluster serves as cofactor.

The catalysed reaction is 5-amino-1-(5-phospho-beta-D-ribosyl)imidazole + S-adenosyl-L-methionine = 4-amino-2-methyl-5-(phosphooxymethyl)pyrimidine + CO + 5'-deoxyadenosine + formate + L-methionine + 3 H(+). Its pathway is cofactor biosynthesis; thiamine diphosphate biosynthesis. In terms of biological role, catalyzes the synthesis of the hydroxymethylpyrimidine phosphate (HMP-P) moiety of thiamine from aminoimidazole ribotide (AIR) in a radical S-adenosyl-L-methionine (SAM)-dependent reaction. The polypeptide is Phosphomethylpyrimidine synthase (Salmonella paratyphi B (strain ATCC BAA-1250 / SPB7)).